The primary structure comprises 202 residues: Dephospho-CoA kinase (202 aa).

The DPCK domain maps to 6-202; that stretch reads KVSITGDLSS…EYFYALKGAL (197 aa). Residue 14–19 coordinates ATP; sequence SSGKTE.

This sequence belongs to the CoaE family.

The protein localises to the cytoplasm. It catalyses the reaction 3'-dephospho-CoA + ATP = ADP + CoA + H(+). It participates in cofactor biosynthesis; coenzyme A biosynthesis; CoA from (R)-pantothenate: step 5/5. Functionally, catalyzes the phosphorylation of the 3'-hydroxyl group of dephosphocoenzyme A to form coenzyme A. The polypeptide is Dephospho-CoA kinase (Chlamydia abortus (strain DSM 27085 / S26/3) (Chlamydophila abortus)).